Here is a 203-residue protein sequence, read N- to C-terminus: Ribonuclease HII (203 aa).

Residues 15-201 (LLVAGLDEAG…VAQAPLRFPE (187 aa)) form the RNase H type-2 domain. Residues Asp21, Glu22, and Asp111 each coordinate a divalent metal cation.

The protein belongs to the RNase HII family. The cofactor is Mn(2+). Mg(2+) is required as a cofactor.

Its subcellular location is the cytoplasm. The catalysed reaction is Endonucleolytic cleavage to 5'-phosphomonoester.. Functionally, endonuclease that specifically degrades the RNA of RNA-DNA hybrids. In Thermus thermophilus (strain ATCC 27634 / DSM 579 / HB8), this protein is Ribonuclease HII.